Consider the following 212-residue polypeptide: MKLPMPIAIQNTQPDVSFQSHSVPRSELAASTHPTRLAARLDPELSAATVVQLQKCARLQPRLAELLLGNDMDWNRIGWGPDLLRGHDPRRAALLAGSIWHARSLLKVVSQRDLARLVERIGADAHAFGIRHLAHAIADKLISDPEKLALQIEHDGHACLGAWLNIRPALERNRVLLRLPLGTAAENPAPEHDGASSGLFSLVIAHFEMESP.

Regulates cultivar-specific nodulation of soybean. The chain is Nodulation protein NolU (nolU) from Rhizobium fredii (Sinorhizobium fredii).